The chain runs to 376 residues: Tetraacyldisaccharide 4'-kinase (376 aa).

ATP is bound at residue 51-58 (AVGGTGKT).

This sequence belongs to the LpxK family.

It carries out the reaction a lipid A disaccharide + ATP = a lipid IVA + ADP + H(+). The protein operates within glycolipid biosynthesis; lipid IV(A) biosynthesis; lipid IV(A) from (3R)-3-hydroxytetradecanoyl-[acyl-carrier-protein] and UDP-N-acetyl-alpha-D-glucosamine: step 6/6. Its function is as follows. Transfers the gamma-phosphate of ATP to the 4'-position of a tetraacyldisaccharide 1-phosphate intermediate (termed DS-1-P) to form tetraacyldisaccharide 1,4'-bis-phosphate (lipid IVA). The sequence is that of Tetraacyldisaccharide 4'-kinase from Bacteroides fragilis (strain ATCC 25285 / DSM 2151 / CCUG 4856 / JCM 11019 / LMG 10263 / NCTC 9343 / Onslow / VPI 2553 / EN-2).